The primary structure comprises 1060 residues: DNA topoisomerase 1 (1060 aa).

The Toprim domain occupies 1–141 (MILVIAEKPN…KRMKFSALTK (141 aa)). Mg(2+) contacts are provided by Glu7 and Asp107. A Topo IA-type catalytic domain is found at 156 to 947 (NFGMANAGIA…EAKIRLTKIL (792 aa)). The segment at 196–201 (STGRVQ) is interaction with DNA. Positions 482–591 (LIGYLAGKGG…IKVYLQLLGI (110 aa)) constitute a DOD-type homing endonuclease domain. The active-site O-(5'-phospho-DNA)-tyrosine intermediate is Tyr690. Residues 978–1006 (CPKCGGDLIVKYNEKTGKRFVGCSNWPKC) form a C4-type 1 zinc finger. The C4-type 2; atypical zinc finger occupies 1025–1050 (CCNGAPVVIIREKDGREWEICLDMNC).

This sequence belongs to the type IA topoisomerase family. Monomer. Requires Mg(2+) as cofactor. In terms of processing, this protein undergoes a protein self splicing that involves a post-translational excision of the intervening region (intein) followed by peptide ligation.

The enzyme catalyses ATP-independent breakage of single-stranded DNA, followed by passage and rejoining.. Functionally, releases the supercoiling and torsional tension of DNA, which is introduced during the DNA replication and transcription, by transiently cleaving and rejoining one strand of the DNA duplex. Introduces a single-strand break via transesterification at a target site in duplex DNA. The scissile phosphodiester is attacked by the catalytic tyrosine of the enzyme, resulting in the formation of a DNA-(5'-phosphotyrosyl)-enzyme intermediate and the expulsion of a 3'-OH DNA strand. The free DNA strand then undergoes passage around the unbroken strand, thus removing DNA supercoils. Finally, in the religation step, the DNA 3'-OH attacks the covalent intermediate to expel the active-site tyrosine and restore the DNA phosphodiester backbone. This is DNA topoisomerase 1 (topA) from Pyrococcus furiosus (strain ATCC 43587 / DSM 3638 / JCM 8422 / Vc1).